The primary structure comprises 118 residues: Putative ankyrin repeat protein R747 (118 aa).

The stretch at 70–99 (NCYYLLDYAIMKNDIPVIVTLIEKGANINR) is one ANK repeat.

This chain is Putative ankyrin repeat protein R747, found in Acanthamoeba polyphaga (Amoeba).